The sequence spans 485 residues: Glutamate--tRNA ligase (485 aa).

The 'HIGH' region signature appears at 11-21; the sequence is PSPTGHLHIGN. Residues 252–256 carry the 'KMSKS' region motif; it reads KLSKR. Residue K255 coordinates ATP.

This sequence belongs to the class-I aminoacyl-tRNA synthetase family. Glutamate--tRNA ligase type 1 subfamily. In terms of assembly, monomer.

Its subcellular location is the cytoplasm. It carries out the reaction tRNA(Glu) + L-glutamate + ATP = L-glutamyl-tRNA(Glu) + AMP + diphosphate. Its function is as follows. Catalyzes the attachment of glutamate to tRNA(Glu) in a two-step reaction: glutamate is first activated by ATP to form Glu-AMP and then transferred to the acceptor end of tRNA(Glu). This Bacillus cereus (strain ATCC 14579 / DSM 31 / CCUG 7414 / JCM 2152 / NBRC 15305 / NCIMB 9373 / NCTC 2599 / NRRL B-3711) protein is Glutamate--tRNA ligase.